Here is a 36-residue protein sequence, read N- to C-terminus: Amanexitide proprotein 2 (36 aa).

Positions 1–10 are excised as a propeptide; the sequence is MSDINATRLP. A cross-link (cyclopeptide (Val-Pro)) is located at residues 11 to 19; the sequence is VFSLPVFFP. The propeptide occupies 20-36; the sequence is FVSDDIQAVLTRGESLC.

This sequence belongs to the MSDIN fungal toxin family. Processed by the macrocyclase-peptidase enzyme POPB to yield a toxic cyclic nonapeptide. POPB first removes 10 residues from the N-terminus. Conformational trapping of the remaining peptide forces the enzyme to release this intermediate rather than proceed to macrocyclization. The enzyme rebinds the remaining peptide in a different conformation and catalyzes macrocyclization of the N-terminal 9 residues. As to expression, expressed in basidiocarps.

In terms of biological role, cyclic nonapeptide that belongs to the MSDIN-like toxin family responsible for a large number of food poisoning cases and deaths. This chain is Amanexitide proprotein 2, found in Amanita exitialis (Guangzhou destroying angel).